The following is a 161-amino-acid chain: 18.1 kDa class I heat shock protein (161 aa).

The sHSP domain maps to Glu-47–Gly-161.

It belongs to the small heat shock protein (HSP20) family. In terms of assembly, may form oligomeric structures.

The protein resides in the cytoplasm. This is 18.1 kDa class I heat shock protein (HSP18.1) from Oryza sativa subsp. japonica (Rice).